The following is a 211-amino-acid chain: Small ribosomal subunit protein uS3 (211 aa).

A KH type-2 domain is found at 39 to 107; that stretch reads VTKYVESSFA…VPSLNVVEVK (69 aa).

It belongs to the universal ribosomal protein uS3 family. As to quaternary structure, part of the 30S ribosomal subunit. Forms a tight complex with proteins S10 and S14.

Functionally, binds the lower part of the 30S subunit head. Binds mRNA in the 70S ribosome, positioning it for translation. This Neorickettsia sennetsu (strain ATCC VR-367 / Miyayama) (Ehrlichia sennetsu) protein is Small ribosomal subunit protein uS3.